Consider the following 337-residue polypeptide: Prenyltransferase terC (337 aa).

Mg(2+) contacts are provided by aspartate 111 and aspartate 115.

It belongs to the FPP/GGPP synthase family. Mg(2+) is required as a cofactor.

The protein operates within secondary metabolite biosynthesis. Its function is as follows. Prenyltransferase; part of the gene cluster that mediates the biosynthesis of terpendoles, indole-diterpene (IDT) mycotoxins including terpendole I, terpendole K, terpendole C, as well as the kinesin Eg5 inhibitor terpendole E. Terpendoles biosynthesis begins with the synthesis of geranylgeranyl diphosphate (GGPP) by a yet unidentified GGPP synthase. Condensation of indole-3-glycerol phosphate with GGPP by the prenyltransferase terC then forms 3-geranylgeranylindole (3-GGI), followed by epoxidation and cyclization of this intermediate (by the FAD-dependent monooxygeanse terM and the terpene cyclase terB) to form paspaline. The cytochrome monooxygenase terQ then hydroxylates paspalline at C-11 to yield terpendole E. The cytochrome monooxygenase terP converts terpendole E to 13-desoxyterpendole I, and terQ converts 13-desoxyterpendole I into terpendole I. TerF and terK are required for conversion of terpendole I to terpendole C which is further converted to terpendole K. This chain is Prenyltransferase terC, found in Tolypocladium album (Soil fungus).